A 555-amino-acid chain; its full sequence is Glutamate--tRNA ligase (555 aa).

Positions 100–110 (PNPSGPLHIGH) match the 'HIGH' region motif.

Belongs to the class-I aminoacyl-tRNA synthetase family. Glutamate--tRNA ligase type 2 subfamily.

It localises to the cytoplasm. It catalyses the reaction tRNA(Glu) + L-glutamate + ATP = L-glutamyl-tRNA(Glu) + AMP + diphosphate. Catalyzes the attachment of glutamate to tRNA(Glu) in a two-step reaction: glutamate is first activated by ATP to form Glu-AMP and then transferred to the acceptor end of tRNA(Glu). This Methanococcus maripaludis (strain DSM 14266 / JCM 13030 / NBRC 101832 / S2 / LL) protein is Glutamate--tRNA ligase.